Reading from the N-terminus, the 489-residue chain is Putative general secretion pathway protein A (489 aa).

26 to 33 lines the ATP pocket; the sequence is GEAGSGKT. Residues 237–257 traverse the membrane as a helical segment; the sequence is MQLAVVMSGTIIALTCGWLLL.

This sequence belongs to the ExeA family.

The protein resides in the cell membrane. May play a regulatory role under conditions of derepressed gsp gene expression. This is Putative general secretion pathway protein A (gspA) from Escherichia coli (strain K12).